We begin with the raw amino-acid sequence, 290 residues long: 4-diphosphocytidyl-2-C-methyl-D-erythritol kinase (290 aa).

The active site involves lysine 14. 103 to 113 (PMGGGLGGGSS) provides a ligand contact to ATP. Aspartate 145 is a catalytic residue.

It belongs to the GHMP kinase family. IspE subfamily. Homodimer.

The enzyme catalyses 4-CDP-2-C-methyl-D-erythritol + ATP = 4-CDP-2-C-methyl-D-erythritol 2-phosphate + ADP + H(+). It participates in isoprenoid biosynthesis; isopentenyl diphosphate biosynthesis via DXP pathway; isopentenyl diphosphate from 1-deoxy-D-xylulose 5-phosphate: step 3/6. Catalyzes the phosphorylation of the position 2 hydroxy group of 4-diphosphocytidyl-2C-methyl-D-erythritol. In Pectobacterium carotovorum subsp. carotovorum (strain PC1), this protein is 4-diphosphocytidyl-2-C-methyl-D-erythritol kinase.